The primary structure comprises 616 residues: Chaperone protein DnaK (616 aa).

Thr-175 carries the phosphothreonine; by autocatalysis modification. The segment at 579 to 616 (GGDPSQAGGFDPNAAGGAQQEPHDDNVVDADFKVDDDK) is disordered. Residues 599–616 (EPHDDNVVDADFKVDDDK) are compositionally biased toward basic and acidic residues.

This sequence belongs to the heat shock protein 70 family.

Its function is as follows. Acts as a chaperone. This Clostridium botulinum (strain Eklund 17B / Type B) protein is Chaperone protein DnaK.